We begin with the raw amino-acid sequence, 185 residues long: ATP synthase subunit b, cyanelle (185 aa).

A helical membrane pass occupies residues 36 to 58 (LINLLVIFFLLIYQGRPFFTALL).

The protein belongs to the ATPase B chain family. In terms of assembly, F-type ATPases have 2 components, F(1) - the catalytic core - and F(0) - the membrane proton channel. F(1) has five subunits: alpha(3), beta(3), gamma(1), delta(1), epsilon(1). F(0) has four main subunits: a(1), b(1), b'(1) and c(10-14). The alpha and beta chains form an alternating ring which encloses part of the gamma chain. F(1) is attached to F(0) by a central stalk formed by the gamma and epsilon chains, while a peripheral stalk is formed by the delta, b and b' chains.

Its subcellular location is the plastid. It localises to the cyanelle thylakoid membrane. Functionally, f(1)F(0) ATP synthase produces ATP from ADP in the presence of a proton or sodium gradient. F-type ATPases consist of two structural domains, F(1) containing the extramembraneous catalytic core and F(0) containing the membrane proton channel, linked together by a central stalk and a peripheral stalk. During catalysis, ATP synthesis in the catalytic domain of F(1) is coupled via a rotary mechanism of the central stalk subunits to proton translocation. In terms of biological role, component of the F(0) channel, it forms part of the peripheral stalk, linking F(1) to F(0). This Cyanophora paradoxa protein is ATP synthase subunit b, cyanelle.